A 437-amino-acid polypeptide reads, in one-letter code: Serine hydroxymethyltransferase 1 (437 aa).

(6S)-5,6,7,8-tetrahydrofolate contacts are provided by residues leucine 132 and 136 to 138; that span reads GHL. Position 241 is an N6-(pyridoxal phosphate)lysine (lysine 241).

The protein belongs to the SHMT family. As to quaternary structure, homodimer. It depends on pyridoxal 5'-phosphate as a cofactor.

It is found in the cytoplasm. The enzyme catalyses (6R)-5,10-methylene-5,6,7,8-tetrahydrofolate + glycine + H2O = (6S)-5,6,7,8-tetrahydrofolate + L-serine. It participates in one-carbon metabolism; tetrahydrofolate interconversion. The protein operates within amino-acid biosynthesis; glycine biosynthesis; glycine from L-serine: step 1/1. Functionally, catalyzes the reversible interconversion of serine and glycine with tetrahydrofolate (THF) serving as the one-carbon carrier. This reaction serves as the major source of one-carbon groups required for the biosynthesis of purines, thymidylate, methionine, and other important biomolecules. Also exhibits THF-independent aldolase activity toward beta-hydroxyamino acids, producing glycine and aldehydes, via a retro-aldol mechanism. The polypeptide is Serine hydroxymethyltransferase 1 (Mesorhizobium japonicum (strain LMG 29417 / CECT 9101 / MAFF 303099) (Mesorhizobium loti (strain MAFF 303099))).